The chain runs to 272 residues: Phosphoribosylformylglycinamidine synthase subunit PurQ (272 aa).

The Glutamine amidotransferase type-1 domain maps to 8 to 243 (VLVMSGYGIN…SEPEYQLKKE (236 aa)). The active-site Nucleophile is the Cys98. Catalysis depends on residues His225, Glu227, and Glu235.

In terms of assembly, part of the FGAM synthase complex composed of 1 PurL, 1 PurQ and 2 PurS subunits.

It localises to the cytoplasm. The catalysed reaction is N(2)-formyl-N(1)-(5-phospho-beta-D-ribosyl)glycinamide + L-glutamine + ATP + H2O = 2-formamido-N(1)-(5-O-phospho-beta-D-ribosyl)acetamidine + L-glutamate + ADP + phosphate + H(+). The enzyme catalyses L-glutamine + H2O = L-glutamate + NH4(+). Its pathway is purine metabolism; IMP biosynthesis via de novo pathway; 5-amino-1-(5-phospho-D-ribosyl)imidazole from N(2)-formyl-N(1)-(5-phospho-D-ribosyl)glycinamide: step 1/2. Functionally, part of the phosphoribosylformylglycinamidine synthase complex involved in the purines biosynthetic pathway. Catalyzes the ATP-dependent conversion of formylglycinamide ribonucleotide (FGAR) and glutamine to yield formylglycinamidine ribonucleotide (FGAM) and glutamate. The FGAM synthase complex is composed of three subunits. PurQ produces an ammonia molecule by converting glutamine to glutamate. PurL transfers the ammonia molecule to FGAR to form FGAM in an ATP-dependent manner. PurS interacts with PurQ and PurL and is thought to assist in the transfer of the ammonia molecule from PurQ to PurL. This is Phosphoribosylformylglycinamidine synthase subunit PurQ from Methanococcus maripaludis (strain C7 / ATCC BAA-1331).